A 683-amino-acid polypeptide reads, in one-letter code: Translation initiation factor IF-2 (683 aa).

The 170-residue stretch at 182 to 351 (KRPPVVTVMG…ILTAEMEELK (170 aa)) folds into the tr-type G domain. The interval 191–198 (GHVDHGKT) is G1. 191-198 (GHVDHGKT) is a GTP binding site. The tract at residues 216 to 220 (GITQH) is G2. The segment at 237 to 240 (DTPG) is G3. GTP contacts are provided by residues 237–241 (DTPGH) and 291–294 (NKID). A G4 region spans residues 291–294 (NKID). The interval 327-329 (SAH) is G5.

It belongs to the TRAFAC class translation factor GTPase superfamily. Classic translation factor GTPase family. IF-2 subfamily.

It is found in the cytoplasm. In terms of biological role, one of the essential components for the initiation of protein synthesis. Protects formylmethionyl-tRNA from spontaneous hydrolysis and promotes its binding to the 30S ribosomal subunits. Also involved in the hydrolysis of GTP during the formation of the 70S ribosomal complex. This is Translation initiation factor IF-2 from Clostridium novyi (strain NT).